The primary structure comprises 239 residues: tRNA (guanine-N(1)-)-methyltransferase (239 aa).

S-adenosyl-L-methionine-binding positions include G113 and 133–138 (IGDYVL). A disordered region spans residues 218-239 (ERRPDLWAARATQNPPERKTNG).

It belongs to the RNA methyltransferase TrmD family. In terms of assembly, homodimer.

The protein localises to the cytoplasm. The catalysed reaction is guanosine(37) in tRNA + S-adenosyl-L-methionine = N(1)-methylguanosine(37) in tRNA + S-adenosyl-L-homocysteine + H(+). Functionally, specifically methylates guanosine-37 in various tRNAs. This chain is tRNA (guanine-N(1)-)-methyltransferase, found in Nitrobacter winogradskyi (strain ATCC 25391 / DSM 10237 / CIP 104748 / NCIMB 11846 / Nb-255).